Here is a 285-residue protein sequence, read N- to C-terminus: ATP synthase gamma chain (285 aa).

The protein belongs to the ATPase gamma chain family. As to quaternary structure, F-type ATPases have 2 components, CF(1) - the catalytic core - and CF(0) - the membrane proton channel. CF(1) has five subunits: alpha(3), beta(3), gamma(1), delta(1), epsilon(1). CF(0) has three main subunits: a, b and c.

Its subcellular location is the cell membrane. Functionally, produces ATP from ADP in the presence of a proton gradient across the membrane. The gamma chain is believed to be important in regulating ATPase activity and the flow of protons through the CF(0) complex. The polypeptide is ATP synthase gamma chain (Dehalococcoides mccartyi (strain ATCC BAA-2266 / KCTC 15142 / 195) (Dehalococcoides ethenogenes (strain 195))).